Here is a 750-residue protein sequence, read N- to C-terminus: Phosphate transporter PHO1 homolog 7 (750 aa).

Residues 1 to 298 (MKFGKDFVRQ…SRSAAKPYME (298 aa)) enclose the SPX domain. The Cytoplasmic segment spans residues 1–350 (MKFGKDFVRQ…KVKKEKHRIT (350 aa)). Residues 351-371 (FSTGFFVGCTVSLVVALVMFI) form a helical membrane-spanning segment. Topologically, residues 372-391 (HARNIMGAVGHKVYMETMFP) are extracellular. A helical membrane pass occupies residues 392–412 (LYSLFAFVVLHMIMYASNIYF). Over 413–435 (WKRYRVNYPFIFGFKEGTELGYR) the chain is Cytoplasmic. Residues 436–456 (HVLLLSFGLGTLALCAVLINL) form a helical membrane-spanning segment. Topologically, residues 457–472 (DMEMDPNTNDYKTMTE) are extracellular. A helical membrane pass occupies residues 473 to 493 (LLPMFILALVVAILFCPFNIF). The Cytoplasmic portion of the chain corresponds to 494–622 (YRSSRVFFLM…YSFNRGNIWK (129 aa)). The region spanning 557-750 (RSSDVYSTFY…NYNEEEDRDS (194 aa)) is the EXS domain. A helical membrane pass occupies residues 623 to 643 (ISAWVFSALATFYGTYWDIVF). Residues 644–666 (DWGLLHRPSKHLLREKLLVPHKA) lie on the Extracellular side of the membrane. Residues 667–687 (VYYVAIVLNIVLRMAWLQTVL) form a helical membrane-spanning segment. Over 688–750 (DFNLSFLHRE…NYNEEEDRDS (63 aa)) the chain is Cytoplasmic.

This sequence belongs to the SYG1 (TC 2.A.94) family. In terms of tissue distribution, expressed in root tips, vascular cylinders of roots and filaments, leaf hydathodes, stem, receptacle and stigma apex.

The protein localises to the cell membrane. Functionally, may transport inorganic phosphate (Pi). The chain is Phosphate transporter PHO1 homolog 7 (PHO1-H7) from Arabidopsis thaliana (Mouse-ear cress).